Here is a 242-residue protein sequence, read N- to C-terminus: Ribonuclease PH (242 aa).

Residues Arg-86 and 124–126 (GTR) contribute to the phosphate site.

The protein belongs to the RNase PH family. As to quaternary structure, homohexameric ring arranged as a trimer of dimers.

It catalyses the reaction tRNA(n+1) + phosphate = tRNA(n) + a ribonucleoside 5'-diphosphate. Phosphorolytic 3'-5' exoribonuclease that plays an important role in tRNA 3'-end maturation. Removes nucleotide residues following the 3'-CCA terminus of tRNAs; can also add nucleotides to the ends of RNA molecules by using nucleoside diphosphates as substrates, but this may not be physiologically important. Probably plays a role in initiation of 16S rRNA degradation (leading to ribosome degradation) during starvation. This is Ribonuclease PH from Bacillus pumilus (strain SAFR-032).